The primary structure comprises 529 residues: Cytochrome P450 monooxygenase fsoB (529 aa).

The chain crosses the membrane as a helical span at residues 4-24 (WLLSLLIAGVVFAIFQLRTVG). Residue Cys-436 participates in heme binding.

This sequence belongs to the cytochrome P450 family. Requires heme as cofactor.

The protein localises to the membrane. Its function is as follows. Cytochrome P450 monooxygenase; part of the gene cluster that mediates the biosynthesis of the enfumafungin-type antibiotic fuscoatroside. Four enzymes are sufficient to produce fuscoatroside: the terpene cyclase-glycosyl transferase fusion protein fsoAthe cytochrome P450 monoxygenases fsoD and fsoE, and the acetyltransferase fsoF; the cytochrome P450 monooxygenase fsoB and the glucose oxidase-like protein fsoC do not seem to play a role in biosynthesis of fuscoatroside. The polypeptide is Cytochrome P450 monooxygenase fsoB (Humicola fuscoatra).